The primary structure comprises 90 residues: UPF0298 protein YlbG (90 aa).

It belongs to the UPF0298 family.

Its subcellular location is the cytoplasm. In Bacillus subtilis (strain 168), this protein is UPF0298 protein YlbG (ylbG).